A 410-amino-acid polypeptide reads, in one-letter code: Heat stress transcription factor A-9 (410 aa).

Residues 1-44 (MGSKKRSPQHPAAAAPPPAVGGGGGGEVSGDGGASTANGPVVPK) form a disordered region. A compositionally biased stretch (gly residues) spans 20 to 33 (VGGGGGGEVSGDGG). A coiled-coil region spans residues 171-246 (GLEKEVETLK…QLVQQQQQQR (76 aa)). The interval 179–229 (LKRDKALLMQQLVDLRHYQQTSNLEVQNLIERLQVMEQNQQQMMALLAIVV) is hydrophobic repeat HR-A/B. The Nuclear localization signal motif lies at 256 to 260 (SKKRR). The short motif at 279-290 (AHIVEYLPPVPE) is the Nuclear export signal element.

It belongs to the HSF family. Class A subfamily. In terms of assembly, homotrimer. In terms of processing, exhibits temperature-dependent phosphorylation.

It is found in the cytoplasm. Its subcellular location is the nucleus. Its function is as follows. Transcriptional regulator that specifically binds DNA of heat shock promoter elements (HSE). This Oryza sativa subsp. japonica (Rice) protein is Heat stress transcription factor A-9 (HSFA9).